The primary structure comprises 130 residues: Small ribosomal subunit protein uS9 (130 aa).

The protein belongs to the universal ribosomal protein uS9 family.

The chain is Small ribosomal subunit protein uS9 from Streptococcus mutans serotype c (strain ATCC 700610 / UA159).